The primary structure comprises 251 residues: Triosephosphate isomerase (251 aa).

9–11 lines the substrate pocket; that stretch reads NWK. The Electrophile role is filled by His-96. Catalysis depends on Glu-168, which acts as the Proton acceptor. Substrate contacts are provided by residues Gly-174, Ser-214, and 235 to 236; that span reads GG.

The protein belongs to the triosephosphate isomerase family. As to quaternary structure, homodimer.

The protein resides in the cytoplasm. The catalysed reaction is D-glyceraldehyde 3-phosphate = dihydroxyacetone phosphate. It functions in the pathway carbohydrate biosynthesis; gluconeogenesis. The protein operates within carbohydrate degradation; glycolysis; D-glyceraldehyde 3-phosphate from glycerone phosphate: step 1/1. Functionally, involved in the gluconeogenesis. Catalyzes stereospecifically the conversion of dihydroxyacetone phosphate (DHAP) to D-glyceraldehyde-3-phosphate (G3P). The chain is Triosephosphate isomerase from Cytophaga hutchinsonii (strain ATCC 33406 / DSM 1761 / CIP 103989 / NBRC 15051 / NCIMB 9469 / D465).